A 502-amino-acid polypeptide reads, in one-letter code: Glutamate--tRNA ligase (502 aa).

The short motif at 12-22 (PSPTGYLHVGG) is the 'HIGH' region element. Positions 259-263 (KLSKR) match the 'KMSKS' region motif. K262 provides a ligand contact to ATP.

Belongs to the class-I aminoacyl-tRNA synthetase family. Glutamate--tRNA ligase type 1 subfamily. In terms of assembly, monomer.

The protein localises to the cytoplasm. The enzyme catalyses tRNA(Glu) + L-glutamate + ATP = L-glutamyl-tRNA(Glu) + AMP + diphosphate. Catalyzes the attachment of glutamate to tRNA(Glu) in a two-step reaction: glutamate is first activated by ATP to form Glu-AMP and then transferred to the acceptor end of tRNA(Glu). This is Glutamate--tRNA ligase from Chlorobium phaeobacteroides (strain DSM 266 / SMG 266 / 2430).